A 274-amino-acid chain; its full sequence is Thiamine kinase (274 aa).

Belongs to the thiamine kinase family.

The catalysed reaction is thiamine + ATP = thiamine phosphate + ADP + H(+). It participates in cofactor biosynthesis; thiamine diphosphate biosynthesis; thiamine phosphate from thiamine: step 1/1. Catalyzes the ATP-dependent phosphorylation of thiamine to thiamine phosphate. Is involved in thiamine salvage. This is Thiamine kinase from Escherichia coli (strain K12 / MC4100 / BW2952).